Here is a 425-residue protein sequence, read N- to C-terminus: MSKIVVAGGTPLYGDVRISGAKNAVLPILCATLLADAPVEISNVPYLHDVITMINLLRELGAGVTMNEGIEAKGRSITIDPRWVRQRVVPYDLVKTMRASVLLLGPLLACYGAAEVALPGGCAIGSRPVDQHIRGLQSLGAEITVENGYIKASVSQGRLKGGRFVFDVVSVTGTENLLMAAAVAQGTSVIENAAMEPEVVDLAECLITLGARVEGAGTPRIVVEGVERLNSGQYAVLPDRIETGTFLVATAMTGGRISMQQVRPQTLDAVLGKLTEAGACIEIGADSIRLDMQGRRPCSVNLTTAPYPGFPTDMQAQFMALNCVAEGVGVIKETIFENRFMHVDELLRLGAKIQIEGHTAIVQGVERLSGAPVMATDLRASASLILAGLVAEGETIIDRIYHLDRGYENIERKLGVLGASIRRMT.

A phosphoenolpyruvate-binding site is contributed by 22 to 23 (KN). Arginine 98 lines the UDP-N-acetyl-alpha-D-glucosamine pocket. Residue cysteine 122 is the Proton donor of the active site. Residue cysteine 122 is modified to 2-(S-cysteinyl)pyruvic acid O-phosphothioketal. UDP-N-acetyl-alpha-D-glucosamine is bound by residues 127 to 131 (RPVDQ), aspartate 313, and isoleucine 335.

Belongs to the EPSP synthase family. MurA subfamily.

The protein resides in the cytoplasm. The catalysed reaction is phosphoenolpyruvate + UDP-N-acetyl-alpha-D-glucosamine = UDP-N-acetyl-3-O-(1-carboxyvinyl)-alpha-D-glucosamine + phosphate. It participates in cell wall biogenesis; peptidoglycan biosynthesis. Functionally, cell wall formation. Adds enolpyruvyl to UDP-N-acetylglucosamine. In Xylella fastidiosa (strain M23), this protein is UDP-N-acetylglucosamine 1-carboxyvinyltransferase.